We begin with the raw amino-acid sequence, 334 residues long: Glycosylinositol phosphorylceramide mannosyl transferase 1 (334 aa).

At 1–26 (MGGGEVSKEMGACSLAYRRGDQKLRK) the chain is on the cytoplasmic side. A helical; Signal-anchor for type II membrane protein membrane pass occupies residues 27–49 (FVTARSTKFLLFCCIAFVLVTIV). Residues 50–334 (CRSSRPWVNS…AVDSRNLWFW (285 aa)) lie on the Lumenal side of the membrane. Asn-58 is a glycosylation site (N-linked (GlcNAc...) asparagine). Substrate is bound by residues 145 to 150 (DSLNNR), 166 to 168 (DDD), Arg-196, and 258 to 262 (RNCED). Asp-168 contacts Mn(2+). Cys-260 and Cys-305 are oxidised to a cystine. Asp-262 is an active-site residue. Asn-271 is a glycosylation site (N-linked (GlcNAc...) asparagine). Substrate-binding positions include 289-302 (STGI…TEKR) and 292-302 (ISSIGGHTEKR).

It belongs to the glycosyltransferase 64 family. It depends on Mn(2+) as a cofactor. As to expression, expressed in leaves, roots, stem, and flowers.

The protein localises to the golgi apparatus membrane. The protein operates within protein modification; protein glycosylation. It participates in sphingolipid metabolism. Functionally, mannosyl transferase (ManT) required for the biosynthesis of mannose-carrying glycosylinositol phosphorylceramides (GIPCs). Maybe involved in cell-cell adhesion that maintains the integrity of organs by providing mechanical strength and facilitating the movement of metabolites throughout the plant during development. Prevents abscisic acid- (ABA-) mediated effects on development (e.g. cell size, flowering time, senescence). Probably implicated in beta-(1,4)-galactan biosynthesis thus being a cell-wall synthesis-related (CWSR) protein. This is Glycosylinositol phosphorylceramide mannosyl transferase 1 from Arabidopsis thaliana (Mouse-ear cress).